The following is a 474-amino-acid chain: ERO1-like protein alpha (474 aa).

The signal sequence occupies residues 1–29; it reads MVSGCCRLDMSSYVSVLVLCSLLLWGSNS. Cystine bridges form between C40–C53, C42–C51, C90–C398, C99–C104, C99–C138, C104–C109, C215–C248, and C401–C404. Positions 194, 196, and 207 each coordinate FAD. Residues S259, H262, R294, and R307 each contribute to the FAD site. Residues N340 and N391 are each glycosylated (N-linked (GlcNAc...) asparagine). Residue N430 is glycosylated (N-linked (GlcNAc...) asparagine).

It belongs to the EROs family. In terms of assembly, predominantly monomer. May function both as a monomer and a homodimer. It depends on FAD as a cofactor. Post-translationally, the Cys-99/Cys-104 and Cys-401/Cys-404 disulfide bonds constitute the redox-active center. The Cys-99/Cys-104 disulfide bond may accept electron from protein disulfide isomerase (PDI) and funnel them to the active site disulfide Cys-401/Cys-404.

The protein localises to the endoplasmic reticulum membrane. With respect to regulation, enzyme activity is tightly regulated to prevent the accumulation of reactive oxygen species in the endoplasmic reticulum. Reversibly down-regulated by the formation of disulfide bonds between the active site Cys-99 and Cys-138, and between Cys-104 and Cys-109. Glutathione may be required to regulate its activity in the endoplasmic reticulum. Functionally, oxidoreductase involved in disulfide bond formation in the endoplasmic reticulum. Efficiently reoxidizes P4HB/PDI, the enzyme catalyzing protein disulfide formation, in order to allow P4HB to sustain additional rounds of disulfide formation. Following P4HB reoxidation, passes its electrons to molecular oxygen via FAD, leading to the production of reactive oxygen species (ROS) in the cell. Required for the folding of immunoglobulins. The polypeptide is ERO1-like protein alpha (Xenopus tropicalis (Western clawed frog)).